The primary structure comprises 271 residues: ATP synthase subunit a (271 aa).

Helical transmembrane passes span 38–58, 100–120, 146–166, 220–240, and 242–262; these read FWTLNIDSMFFSVVLGLLFLV, LIAPLALTIFVWVFLMNLMDL, DVNITLSMALGVFILILFYSI, LIFILIAGLLPWWSQWILNVP, and AIFHILIITLQAFIFMVLTIV.

Belongs to the ATPase A chain family. As to quaternary structure, F-type ATPases have 2 components, CF(1) - the catalytic core - and CF(0) - the membrane proton channel. CF(1) has five subunits: alpha(3), beta(3), gamma(1), delta(1), epsilon(1). CF(0) has three main subunits: a(1), b(2) and c(9-12). The alpha and beta chains form an alternating ring which encloses part of the gamma chain. CF(1) is attached to CF(0) by a central stalk formed by the gamma and epsilon chains, while a peripheral stalk is formed by the delta and b chains.

It is found in the cell inner membrane. In terms of biological role, key component of the proton channel; it plays a direct role in the translocation of protons across the membrane. This Salmonella arizonae (strain ATCC BAA-731 / CDC346-86 / RSK2980) protein is ATP synthase subunit a.